Reading from the N-terminus, the 266-residue chain is NADP-dependent mannitol dehydrogenase (266 aa).

Positions 53, 107, and 140 each coordinate NADP(+). S159 functions as the Proton donor in the catalytic mechanism. 4 residues coordinate NADP(+): Y174, K178, I206, and T208. The active-site Proton acceptor is the Y174. K178 (lowers pKa of active site Tyr) is an active-site residue.

Belongs to the short-chain dehydrogenases/reductases (SDR) family. In terms of assembly, homotetramer.

It carries out the reaction D-mannitol + NADP(+) = D-fructose + NADPH + H(+). In terms of biological role, D-mannitol 2-dehydrogenase which is not necessary for D-mannitol catabolism. D-mannitol metabolism occurs via at least two different routes involving mannitol dehydrogenase (MDH) or mannitol 1-phosphate dehydrogenase, and the exact physiological role of mannitol dehydrogenases remains unclear. The polypeptide is NADP-dependent mannitol dehydrogenase (Hypocrea jecorina (strain ATCC 56765 / BCRC 32924 / NRRL 11460 / Rut C-30) (Trichoderma reesei)).